We begin with the raw amino-acid sequence, 277 residues long: NADPH-dependent 7-cyano-7-deazaguanine reductase (277 aa).

A substrate-binding site is contributed by 83-85; that stretch reads VES. Residue 85–86 participates in NADPH binding; that stretch reads SK. C184 functions as the Thioimide intermediate in the catalytic mechanism. Residue D191 is the Proton donor of the active site. Position 223-224 (223-224) interacts with substrate; that stretch reads HE. 252–253 provides a ligand contact to NADPH; the sequence is RG.

This sequence belongs to the GTP cyclohydrolase I family. QueF type 2 subfamily. In terms of assembly, homodimer.

It is found in the cytoplasm. The catalysed reaction is 7-aminomethyl-7-carbaguanine + 2 NADP(+) = 7-cyano-7-deazaguanine + 2 NADPH + 3 H(+). It participates in tRNA modification; tRNA-queuosine biosynthesis. In terms of biological role, catalyzes the NADPH-dependent reduction of 7-cyano-7-deazaguanine (preQ0) to 7-aminomethyl-7-deazaguanine (preQ1). In Cupriavidus taiwanensis (strain DSM 17343 / BCRC 17206 / CCUG 44338 / CIP 107171 / LMG 19424 / R1) (Ralstonia taiwanensis (strain LMG 19424)), this protein is NADPH-dependent 7-cyano-7-deazaguanine reductase.